Consider the following 123-residue polypeptide: Large ribosomal subunit protein uL14 (123 aa).

The protein belongs to the universal ribosomal protein uL14 family. In terms of assembly, part of the 50S ribosomal subunit. Forms a cluster with proteins L3 and L19. In the 70S ribosome, L14 and L19 interact and together make contacts with the 16S rRNA in bridges B5 and B8.

Functionally, binds to 23S rRNA. Forms part of two intersubunit bridges in the 70S ribosome. In Pectobacterium atrosepticum (strain SCRI 1043 / ATCC BAA-672) (Erwinia carotovora subsp. atroseptica), this protein is Large ribosomal subunit protein uL14.